The sequence spans 157 residues: E3 ubiquitin-protein ligase RHA1B (157 aa).

The segment at 85–129 (CTVCLSDFVSDDKIRQLPKCGHVFHHRCLDRWIVDCNKITCPICR) adopts an RING-type; atypical zinc-finger fold.

The catalysed reaction is S-ubiquitinyl-[E2 ubiquitin-conjugating enzyme]-L-cysteine + [acceptor protein]-L-lysine = [E2 ubiquitin-conjugating enzyme]-L-cysteine + N(6)-ubiquitinyl-[acceptor protein]-L-lysine.. Its pathway is protein modification; protein ubiquitination. Its function is as follows. Possesses E3 ubiquitin-protein ligase activity when associated with the E2 enzyme UBC8 in vitro. The protein is E3 ubiquitin-protein ligase RHA1B of Arabidopsis thaliana (Mouse-ear cress).